An 86-amino-acid polypeptide reads, in one-letter code: Protein IDA-LIKE 1 (86 aa).

Positions 1–27 (MNLSHKTMFMTLYIVFLLIFGSYNATA) are cleaved as a signal peptide.

In terms of tissue distribution, expressed in roots.

The protein localises to the secreted. The protein resides in the extracellular space. Its function is as follows. Involved in an ethylene-independent separation step of floral abscission. May act with RLK5 and HSL2 as ligand-receptor pairs. This Arabidopsis thaliana (Mouse-ear cress) protein is Protein IDA-LIKE 1 (IDL1).